The chain runs to 108 residues: Protein translation factor SUI1 (108 aa).

The segment at 1–20 (MSIENLKSFDPFADTGDDEA) is disordered.

The protein belongs to the SUI1 family.

Additional factor that functions in concert with eIF-2 and the initiator tRNA in directing the ribosome to the proper start site of translation. This Eremothecium gossypii (strain ATCC 10895 / CBS 109.51 / FGSC 9923 / NRRL Y-1056) (Yeast) protein is Protein translation factor SUI1 (SUI1A).